The primary structure comprises 83 residues: Small ribosomal subunit protein bS20 (83 aa).

The segment at 1-21 (MPNIKSAIKRVRTTETAEERN) is disordered. Basic and acidic residues predominate over residues 12-21 (RTTETAEERN).

It belongs to the bacterial ribosomal protein bS20 family.

In terms of biological role, binds directly to 16S ribosomal RNA. In Staphylococcus epidermidis (strain ATCC 35984 / DSM 28319 / BCRC 17069 / CCUG 31568 / BM 3577 / RP62A), this protein is Small ribosomal subunit protein bS20.